We begin with the raw amino-acid sequence, 144 residues long: MIALIQRVSEAAVKVDGEVTGEINQGLLILLGVEREDDEAKAKRLMERVLTYRVFEDQDGKMNLNVQQVNGSVLVVSQFTLPADTKKGTRPGFSKGAHPVDAERLYDYFSDLCEEKLHTQRGRFAADMKVSLVNDGPVTFWLQV.

The short motif at 136 to 137 (GP) is the Gly-cisPro motif, important for rejection of L-amino acids element.

It belongs to the DTD family. Homodimer.

Its subcellular location is the cytoplasm. The catalysed reaction is glycyl-tRNA(Ala) + H2O = tRNA(Ala) + glycine + H(+). The enzyme catalyses a D-aminoacyl-tRNA + H2O = a tRNA + a D-alpha-amino acid + H(+). In terms of biological role, an aminoacyl-tRNA editing enzyme that deacylates mischarged D-aminoacyl-tRNAs. Also deacylates mischarged glycyl-tRNA(Ala), protecting cells against glycine mischarging by AlaRS. Acts via tRNA-based rather than protein-based catalysis; rejects L-amino acids rather than detecting D-amino acids in the active site. By recycling D-aminoacyl-tRNA to D-amino acids and free tRNA molecules, this enzyme counteracts the toxicity associated with the formation of D-aminoacyl-tRNA entities in vivo and helps enforce protein L-homochirality. This Aliivibrio fischeri (strain MJ11) (Vibrio fischeri) protein is D-aminoacyl-tRNA deacylase.